The chain runs to 377 residues: Histidinol-phosphate aminotransferase (377 aa).

Lys-232 is modified (N6-(pyridoxal phosphate)lysine).

The protein belongs to the class-II pyridoxal-phosphate-dependent aminotransferase family. Histidinol-phosphate aminotransferase subfamily. As to quaternary structure, homodimer. Requires pyridoxal 5'-phosphate as cofactor.

The catalysed reaction is L-histidinol phosphate + 2-oxoglutarate = 3-(imidazol-4-yl)-2-oxopropyl phosphate + L-glutamate. The protein operates within amino-acid biosynthesis; L-histidine biosynthesis; L-histidine from 5-phospho-alpha-D-ribose 1-diphosphate: step 7/9. The polypeptide is Histidinol-phosphate aminotransferase (Mycobacterium sp. (strain JLS)).